The sequence spans 155 residues: Ribonuclease H (155 aa).

The 142-residue stretch at 1–142 (MLKQVEIFTD…CDELARAAAS (142 aa)) folds into the RNase H type-1 domain. Mg(2+) is bound by residues Asp-10, Glu-48, Asp-70, and Asp-134.

The protein belongs to the RNase H family. As to quaternary structure, monomer. Mg(2+) is required as a cofactor.

It localises to the cytoplasm. It catalyses the reaction Endonucleolytic cleavage to 5'-phosphomonoester.. Its function is as follows. Endonuclease that specifically degrades the RNA of RNA-DNA hybrids. The protein is Ribonuclease H of Klebsiella pneumoniae (strain 342).